Consider the following 157-residue polypeptide: Lectin (157 aa).

A disulfide bond links Cys-37 and Cys-54.

In terms of assembly, homodimer. Detected in fruits (at protein level).

The protein resides in the secreted. Binds with high affinity specifically to chito-oligosaccharides. May play a role in plant defense against pathogens by directly binding with the chitin cell wall. Forms filamentous structures at higher concentrations and may promote wound healing by forming filaments with phloem proteins like PP1. This chain is Lectin, found in Coccinia grandis (Ivy gourd).